Consider the following 183-residue polypeptide: DELTA-miturgitoxin-Cp1a (183 aa).

An N-terminal signal peptide occupies residues 1 to 20; the sequence is MKFSLFFSVFFLAVLHACLS. A propeptide spanning residues 21 to 47 is cleaved from the precursor; sequence ESEIDLEDEEHFMSSDSFLSEIQDESR. The Processing quadruplet motif signature appears at 44–47; sequence DESR. 8 cysteine pairs are disulfide-bonded: Cys-51-Cys-66, Cys-58-Cys-75, Cys-65-Cys-88, Cys-77-Cys-86, Cys-115-Cys-130, Cys-122-Cys-139, Cys-129-Cys-157, and Cys-141-Cys-155. 2 Domain repeats span residues 51–77 and 115–141; these read CIERNKECTNDRHGCCRGKIFKDKCTC and CVPKHADCSKRKDDCCKGGIFKYQCKC. Residues 51–141 are 2 X approximate repeats with cysteine pattern C-C-CC-C-C; it reads CIERNKECTN…GGIFKYQCKC (91 aa). The tract at residues 164–177 is predicted alpha-helix; it reads QAIEGALRIAKKLI. Residue Trp-181 is modified to Tryptophan amide.

This sequence belongs to the neurotoxin 19 (CSTX) family. Double-CSTX subfamily. In terms of processing, cleavage of the propeptide depends on the processing quadruplet motif (XXXR, with at least one of X being E). As to expression, expressed by the venom gland.

The protein localises to the secreted. The protein resides in the target cell membrane. In terms of biological role, spider venom toxin that exhibits cytolytic activity by forming an alpha-helix across the membrane. Lethal to insect larvae. Causes instant paralysis and death in the larvae of the flesh fly (S.carnaria) at doses of 20 ug/g, at doses of less than 10 ug/g causes reversible paralysis. Has cytolytic activity against insect Sf9 cells. Causes stable and irreversible depolarization of fly muscle fibers, leading to contracture at higher toxin concentrations. Destabilizes membranes. The sequence is that of DELTA-miturgitoxin-Cp1a from Cheiracanthium punctorium (Yellow sac spider).